The primary structure comprises 442 residues: ATP-dependent protease ATPase subunit HslU (442 aa).

ATP-binding positions include I18, 60-65, D255, E320, and R392; that span reads GVGKTE.

Belongs to the ClpX chaperone family. HslU subfamily. A double ring-shaped homohexamer of HslV is capped on each side by a ring-shaped HslU homohexamer. The assembly of the HslU/HslV complex is dependent on binding of ATP.

The protein localises to the cytoplasm. In terms of biological role, ATPase subunit of a proteasome-like degradation complex; this subunit has chaperone activity. The binding of ATP and its subsequent hydrolysis by HslU are essential for unfolding of protein substrates subsequently hydrolyzed by HslV. HslU recognizes the N-terminal part of its protein substrates and unfolds these before they are guided to HslV for hydrolysis. The chain is ATP-dependent protease ATPase subunit HslU from Hahella chejuensis (strain KCTC 2396).